The chain runs to 776 residues: K(+) efflux antiporter 3, chloroplastic (776 aa).

Residues Met1–Phe72 constitute a chloroplast transit peptide. Residues Tyr73–Asp93 lie on the Lumenal, thylakoid side of the membrane. A helical membrane pass occupies residues Val94–Val114. Residue Thr115 is a topological domain, stromal. Residues Val116–Ala136 form a helical membrane-spanning segment. The Lumenal, thylakoid segment spans residues Gly137–Lys153. Residues Val154–Ala174 form a helical membrane-spanning segment. At Arg175–Lys181 the chain is on the stromal side. Residues Phe182–Glu202 traverse the membrane as a helical segment. At Leu203–Glu232 the chain is on the lumenal, thylakoid side. Residues Ala233–Ala253 traverse the membrane as a helical segment. Residues Glu254 to Thr266 lie on the Stromal side of the membrane. The chain crosses the membrane as a helical span at residues Leu267 to Leu287. The Lumenal, thylakoid portion of the chain corresponds to Glu288–Ser296. The chain crosses the membrane as a helical span at residues Ile297 to Leu317. Residues Gly318–Ala338 are Stromal-facing. The chain crosses the membrane as a helical span at residues Phe339 to Phe359. At Ser360–Arg389 the chain is on the lumenal, thylakoid side. A helical membrane pass occupies residues Gly390–Phe410. At Arg411 to Asn415 the chain is on the stromal side. A helical membrane pass occupies residues Val416 to Pro436. The Lumenal, thylakoid segment spans residues Arg437–Ser445. A helical membrane pass occupies residues Val446–Ala466. Residues Asn467 to Arg468 lie on the Stromal side of the membrane. The helical transmembrane segment at Leu469–Ala489 threads the bilayer. The Lumenal, thylakoid segment spans residues Leu490–Ser526. One can recognise an RCK N-terminal domain in the interval Ser524–Leu649. A helical membrane pass occupies residues Ile527–Leu547. At Val548–Asp776 the chain is on the stromal side. Residues Met728–Asp776 are disordered.

It belongs to the monovalent cation:proton antiporter 2 (CPA2) transporter (TC 2.A.37) family. KEA (TC 2.A.37.1) subfamily. Expressed at low levels in flowers, siliques and leaves. In terms of tissue distribution, expressed at low levels in flowers and leaves. As to expression, most abundant splice form in all organs, including siliques, flowers, leaves and roots. Preferentially expressed in photosynthetically active tissues, including seedling cotyledons and mature leaves. Expressed in shoots and roots.

It is found in the plastid. The protein resides in the chloroplast membrane. It localises to the golgi apparatus membrane. Its subcellular location is the chloroplast thylakoid membrane. The enzyme catalyses K(+)(in) + H(+)(out) = K(+)(out) + H(+)(in). Regulated by a mechanism involving lumenal C-terminus region; a fine-tuned balance between photoprotective energy dissipation in high light and a maximum quantum yield in low light involves a reduced activity under high light. Electroneutral K(+)/H(+) efflux antiporter assuring proton efflux from the thylakoid lumen to the plastid stroma, thus increasing the membrane potential at the expense of the proton gradient (delta pH) component of the proton motive force (PMF). Promotes photosynthesis and growth in conditions where the chloroplast (cp)ATP synthase activity is low (e.g. cgl160 mutant background) by reducing the pH gradient across the thylakoid membrane. Accelerates photosynthetic acclimation in fluctuating light environments by modulating two components of the proton motive force, the proton gradient and the electric potential (delta Psi). Promotes the relaxation of photoprotective energy-dependent non-photochemical quenching (NPQ) after transitions from high to low light, thus enhancing photosystem II (PSII) quantum efficiency in fluctuating light. On transition from high to low light, slows down photoprotection by dissipating the pH gradient across the thylakoid membrane. During photosynthetic response on transition from dark to low light, involved in a sequential mechanism of adaptation; VCCN1 and CLCe first trigger the activation of photoprotection, which is later down-regulated by KEA3 to a low steady state, while adjusting electron transport. Together with the chloroplast NADH dehydrogenase-like (NDH) complex, maximizes photosynthesis efficiency after a long dark adaptation. Required in roots for rapid hyperosmotic-induced Ca(2+) responses and for osmo-sensory potentiation in hyperosmotic conditions. In terms of biological role, low K(+)/H(+) efflux antiporter activity. Functionally, low K(+)/H(+) efflux antiporter activity. Promotes non-photochemical quenching (NPQ) in high light conditions. The protein is K(+) efflux antiporter 3, chloroplastic of Arabidopsis thaliana (Mouse-ear cress).